Reading from the N-terminus, the 875-residue chain is Alanine--tRNA ligase (875 aa).

Zn(2+)-binding residues include His565, His569, Cys666, and His670.

The protein belongs to the class-II aminoacyl-tRNA synthetase family. Zn(2+) serves as cofactor.

The protein resides in the cytoplasm. The catalysed reaction is tRNA(Ala) + L-alanine + ATP = L-alanyl-tRNA(Ala) + AMP + diphosphate. Catalyzes the attachment of alanine to tRNA(Ala) in a two-step reaction: alanine is first activated by ATP to form Ala-AMP and then transferred to the acceptor end of tRNA(Ala). Also edits incorrectly charged Ser-tRNA(Ala) and Gly-tRNA(Ala) via its editing domain. In Leptothrix cholodnii (strain ATCC 51168 / LMG 8142 / SP-6) (Leptothrix discophora (strain SP-6)), this protein is Alanine--tRNA ligase.